Here is a 139-residue protein sequence, read N- to C-terminus: Nucleoside diphosphate kinase (139 aa).

Positions 10, 58, 86, 92, 103, and 113 each coordinate ATP. The Pros-phosphohistidine intermediate role is filled by H116.

This sequence belongs to the NDK family. As to quaternary structure, homotetramer. The cofactor is Mg(2+).

It localises to the cytoplasm. It carries out the reaction a 2'-deoxyribonucleoside 5'-diphosphate + ATP = a 2'-deoxyribonucleoside 5'-triphosphate + ADP. The catalysed reaction is a ribonucleoside 5'-diphosphate + ATP = a ribonucleoside 5'-triphosphate + ADP. Its function is as follows. Major role in the synthesis of nucleoside triphosphates other than ATP. The ATP gamma phosphate is transferred to the NDP beta phosphate via a ping-pong mechanism, using a phosphorylated active-site intermediate. In Nitratidesulfovibrio vulgaris (strain DSM 19637 / Miyazaki F) (Desulfovibrio vulgaris), this protein is Nucleoside diphosphate kinase.